The following is a 63-amino-acid chain: Hyphancin-3E (63 aa).

An N-terminal signal peptide occupies residues 1-22 (MNFSRILFFVFTCFVALASVSG). A propeptide spans 23–26 (APEP) (removed by a dipeptidylpeptidase). A Leucine amide modification is found at L61.

This sequence belongs to the cecropin family.

It is found in the secreted. Functionally, has antibacterial activity. The protein is Hyphancin-3E of Hyphantria cunea (Fall webworm moth).